Here is a 167-residue protein sequence, read N- to C-terminus: tRNA-specific adenosine deaminase (167 aa).

Residues 6-117 (FSHEYWMRHA…DAKTGAAGSL (112 aa)) form the CMP/dCMP-type deaminase domain. A Zn(2+)-binding site is contributed by histidine 57. Glutamate 59 acts as the Proton donor in catalysis. Positions 87 and 90 each coordinate Zn(2+).

The protein belongs to the cytidine and deoxycytidylate deaminase family. In terms of assembly, homodimer. It depends on Zn(2+) as a cofactor.

It catalyses the reaction adenosine(34) in tRNA + H2O + H(+) = inosine(34) in tRNA + NH4(+). Catalyzes the deamination of adenosine to inosine at the wobble position 34 of tRNA(Arg2). Essential for cell viability. The polypeptide is tRNA-specific adenosine deaminase (Escherichia coli (strain K12)).